The chain runs to 901 residues: Glutamate receptor 2.1 (901 aa).

The first 25 residues, 1 to 25 (MKRENNLVLSLLFFVIVFLMQVGEA), serve as a signal peptide directing secretion. The Extracellular portion of the chain corresponds to 26–574 (QNRITNVNVG…SSTIFLMPLT (549 aa)). 9 N-linked (GlcNAc...) asparagine glycosylation sites follow: Asn-46, Asn-53, Asn-204, Asn-267, Asn-331, Asn-342, Asn-461, Asn-477, and Asn-536. A helical membrane pass occupies residues 575 to 595 (LALWLISLLSFFIIGLVVWVL). Over 596–604 (EHRVNPDFD) the chain is Cytoplasmic. The chain crosses the membrane as a helical span at residues 605–625 (GPGQYQLSTIFWFSFSIMVFA). Residues 626-629 (PRER) are Cytoplasmic-facing. A helical membrane pass occupies residues 630 to 650 (VLSFWARVVVIIWYFLVLVLT). Residues 651–823 (QSYTASLASL…VSFRQLGFDS (173 aa)) lie on the Extracellular side of the membrane. The chain crosses the membrane as a helical span at residues 824 to 844 (FWVLFLVAAIVCTMALLKFVY). At 845 to 901 (QFLKENPNQRNLRVLWEKFNEPDQKSYIKDVTKCQCSSGQGMPKNGQEGANAVNNGN) the chain is on the cytoplasmic side.

It belongs to the glutamate-gated ion channel (TC 1.A.10.1) family. In terms of assembly, may form heteromers. As to expression, expressed predominantly in roots. First strongly detected in all cell types of the root except at the apex. Later expressed at the root-shoot junction.

It is found in the membrane. Glutamate-gated receptor that probably acts as a non-selective cation channel. May be involved in light-signal transduction and calcium homeostasis via the regulation of calcium influx into cells. In Arabidopsis thaliana (Mouse-ear cress), this protein is Glutamate receptor 2.1 (GLR2.1).